The following is a 172-amino-acid chain: Putative acetyltransferase YvoF (172 aa).

It belongs to the transferase hexapeptide repeat family.

This Bacillus subtilis (strain 168) protein is Putative acetyltransferase YvoF (yvoF).